Here is a 793-residue protein sequence, read N- to C-terminus: Caldesmon (793 aa).

Residue R12 is modified to Phosphoserine. A Phosphotyrosine modification is found at E21. Disordered regions lie at residues 26–94 (AYQR…DDEA), 108–407 (QKRL…IKGE), and 434–458 (KKQG…KPTF). The interval 26–207 (AYQRNDDDEE…PKRGSIGENQ (182 aa)) is myosin and calmodulin-binding. Residues 47-56 (QERLRQKQEE) show a composition bias toward basic and acidic residues. A compositionally biased stretch (polar residues) spans 60-74 (GQVTDQVEVNAQNSV). Residues 108-122 (QKRLQEALERQKEFD) show a composition bias toward basic and acidic residues. Phosphoserine is present on S129. Composition is skewed to basic and acidic residues over residues 146 to 162 (TTEK…RYEI) and 173 to 188 (QKND…KEDK). 2 positions are modified to phosphoserine: E196 and S202. Residues I203 and E209 each participate in a glycyl lysine isopeptide (Lys-Gly) (interchain with G-Cter in SUMO2) cross-link. 2 stretches are compositionally biased toward basic and acidic residues: residues 236-407 (EEPK…IKGE) and 435-458 (KQGE…KPTF). 3 tandem repeats follow at residues 319-332 (EEEK…QRIK), 333-346 (EEEK…QRIK), and 347-360 (EEEK…QRIK). The 3 X 14 AA tandem repeats of E-E-E-K-R-A-A-E-E-R-Q-R-I-K stretch occupies residues 319 to 375 (EEEKRAAEERQRIKEEEKRAAEERQRIKEEEKRAAEERQRIKEEEKRAAEERQRARA). K459 is covalently cross-linked (Glycyl lysine isopeptide (Lys-Gly) (interchain with G-Cter in SUMO2)). The interval 492 to 640 (KSQNGEFMTH…KKPFKCFTPK (149 aa)) is disordered. Basic and acidic residues-rich tracts occupy residues 532–558 (AGKR…KQKQ) and 566–633 (EELK…DKKP). The tropomyosin-binding stretch occupies residues 564 to 621 (ELEELKKKREERRKVLEEEEQRRKQEEADRKLREEEEKRRLKEEIERRRAEAAEKRQK). Residue S643 is modified to Phosphoserine. Residue K645 forms a Glycyl lysine isopeptide (Lys-Gly) (interchain with G-Cter in SUMO2) linkage. The segment at 653-686 (LNKSVQKSSGVKSTHQAAIVSKIDSRLEQYTSAI) is strong actin-binding. Phosphoserine is present on S656. The tract at residues 664-674 (KSTHQAAIVSK) is tropomyosin-binding. 3 disordered regions span residues 687–706 (EGTK…PVPA), 721–740 (VFSS…GLKV), and 747–793 (NEWL…PTKV). Positions 716–722 (WEKGNVF) are calmodulin-binding. Over residues 721–733 (VFSSPTAAGTPNK) the composition is skewed to polar residues. Position 724 is a phosphoserine (S724). Residues T730 and T753 each carry the phosphothreonine modification. S759 is modified (phosphoserine). A compositionally biased stretch (basic and acidic residues) spans 765 to 784 (SDLRPGDVSSKRNLWEKQSV). The segment at 768–793 (RPGDVSSKRNLWEKQSVDKVTSPTKV) is weak actin-binding. The residue at position 789 (S789) is a Phosphoserine.

This sequence belongs to the caldesmon family. In non-muscle cells, phosphorylation by CDK1 during mitosis causes caldesmon to dissociate from microfilaments. Phosphorylation reduces caldesmon binding to actin, myosin, and calmodulin as well as its inhibition of actomyosin ATPase activity. Phosphorylation also occurs in both quiescent and dividing smooth muscle cells with similar effects on the interaction with actin and calmodulin and on microfilaments reorganization. CDK1-mediated phosphorylation promotes Schwann cell migration during peripheral nerve regeneration. In terms of tissue distribution, high-molecular-weight caldesmon (isoform 1) is predominantly expressed in smooth muscles, whereas low-molecular-weight caldesmon (isoforms 2, 3, 4 and 5) are widely distributed in non-muscle tissues and cells. Not expressed in skeletal muscle or heart.

It localises to the cytoplasm. The protein localises to the cytoskeleton. Its subcellular location is the myofibril. It is found in the stress fiber. Functionally, actin- and myosin-binding protein implicated in the regulation of actomyosin interactions in smooth muscle and nonmuscle cells (could act as a bridge between myosin and actin filaments). Stimulates actin binding of tropomyosin which increases the stabilization of actin filament structure. In muscle tissues, inhibits the actomyosin ATPase by binding to F-actin. This inhibition is attenuated by calcium-calmodulin and is potentiated by tropomyosin. Interacts with actin, myosin, two molecules of tropomyosin and with calmodulin. Also plays an essential role during cellular mitosis and receptor capping. Involved in Schwann cell migration during peripheral nerve regeneration. In Homo sapiens (Human), this protein is Caldesmon (CALD1).